The chain runs to 197 residues: Putative manganese efflux pump MntP 1 (197 aa).

Helical transmembrane passes span valine 8 to alanine 28, valine 43 to leucine 63, valine 66 to leucine 86, leucine 123 to leucine 143, tryptophan 146 to leucine 166, and aspartate 176 to isoleucine 196.

The protein belongs to the MntP (TC 9.B.29) family.

The protein resides in the cell inner membrane. Its function is as follows. Probably functions as a manganese efflux pump. This chain is Putative manganese efflux pump MntP 1, found in Psychrobacter cryohalolentis (strain ATCC BAA-1226 / DSM 17306 / VKM B-2378 / K5).